Here is a 284-residue protein sequence, read N- to C-terminus: 4-hydroxybenzoate octaprenyltransferase (284 aa).

A run of 9 helical transmembrane segments spans residues 19–39, 42–62, 85–105, 107–127, 134–154, 165–185, 211–231, 233–253, and 261–281; these read IPIL…SHGL, ISYL…GCII, GQLS…VAFI, VLFL…LAIL, FFAI…FMAF, AWIF…IYAL, ILLF…YCDF, SFFY…YFLY, and CINA…IAVI.

Belongs to the UbiA prenyltransferase family. Mg(2+) serves as cofactor.

It localises to the cell inner membrane. It catalyses the reaction all-trans-octaprenyl diphosphate + 4-hydroxybenzoate = 4-hydroxy-3-(all-trans-octaprenyl)benzoate + diphosphate. The protein operates within cofactor biosynthesis; ubiquinone biosynthesis. In terms of biological role, catalyzes the prenylation of para-hydroxybenzoate (PHB) with an all-trans polyprenyl group. Mediates the second step in the final reaction sequence of ubiquinone-8 (UQ-8) biosynthesis, which is the condensation of the polyisoprenoid side chain with PHB, generating the first membrane-bound Q intermediate 3-octaprenyl-4-hydroxybenzoate. This chain is 4-hydroxybenzoate octaprenyltransferase, found in Francisella tularensis subsp. tularensis (strain FSC 198).